We begin with the raw amino-acid sequence, 476 residues long: Cytosolic iron-sulfur assembly component 3 (476 aa).

Ala2 is subject to N-acetylalanine. Residues Cys24, Cys71, Cys74, Cys77, Cys190, and Cys246 each contribute to the [4Fe-4S] cluster site. The disordered stretch occupies residues 297 to 316 (DGLTSSVSAEEPSSHRGGGS). Residues Cys395 and Cys399 each coordinate [4Fe-4S] cluster.

It belongs to the NARF family. As to quaternary structure, external component of the CIA complex. In the CIA complex, interacts directly with CIAO1 and MMS19.

Component of the cytosolic iron-sulfur protein assembly (CIA) complex, a multiprotein complex that mediates the incorporation of iron-sulfur cluster into extramitochondrial Fe/S proteins. Seems to negatively regulate the level of HIF1A expression, although this effect could be indirect. This Mus musculus (Mouse) protein is Cytosolic iron-sulfur assembly component 3 (Ciao3).